A 234-amino-acid polypeptide reads, in one-letter code: Endonuclease V (234 aa).

Residues D36 and D104 each coordinate Mg(2+).

The protein belongs to the endonuclease V family. Mg(2+) is required as a cofactor.

Its subcellular location is the cytoplasm. It carries out the reaction Endonucleolytic cleavage at apurinic or apyrimidinic sites to products with a 5'-phosphate.. DNA repair enzyme involved in the repair of deaminated bases. Selectively cleaves double-stranded DNA at the second phosphodiester bond 3' to a deoxyinosine leaving behind the intact lesion on the nicked DNA. This Yersinia enterocolitica serotype O:8 / biotype 1B (strain NCTC 13174 / 8081) protein is Endonuclease V.